Reading from the N-terminus, the 362-residue chain is Glutaminase-asparaginase (362 aa).

The first 25 residues, Met1 to Ala25, serve as a signal peptide directing secretion. Residues Ala35–Tyr362 enclose the Asparaginase/glutaminase domain. The active-site Acyl-ester intermediate is the Thr45. Substrate is bound by residues Ser92 and Thr125–Asp126.

Belongs to the asparaginase 1 family. Homotetramer.

It is found in the periplasm. It catalyses the reaction L-glutamine + H2O = L-glutamate + NH4(+). The enzyme catalyses L-asparagine + H2O = L-aspartate + NH4(+). The protein is Glutaminase-asparaginase of Pseudomonas fluorescens biotype A.